The following is a 508-amino-acid chain: Photosystem II CP47 reaction center protein (508 aa).

6 consecutive transmembrane segments (helical) span residues 21–36 (SVHI…WAGS), 101–115 (IVFS…IWHW), 140–156 (GIHL…FGAF), 203–218 (IAAG…FHLS), 237–252 (VLSS…AFVV), and 457–472 (SFAL…HGAR).

The protein belongs to the PsbB/PsbC family. PsbB subfamily. In terms of assembly, PSII is composed of 1 copy each of membrane proteins PsbA, PsbB, PsbC, PsbD, PsbE, PsbF, PsbH, PsbI, PsbJ, PsbK, PsbL, PsbM, PsbT, PsbX, PsbY, PsbZ, Psb30/Ycf12, at least 3 peripheral proteins of the oxygen-evolving complex and a large number of cofactors. It forms dimeric complexes. Binds multiple chlorophylls. PSII binds additional chlorophylls, carotenoids and specific lipids. is required as a cofactor.

It localises to the plastid. The protein localises to the chloroplast thylakoid membrane. Functionally, one of the components of the core complex of photosystem II (PSII). It binds chlorophyll and helps catalyze the primary light-induced photochemical processes of PSII. PSII is a light-driven water:plastoquinone oxidoreductase, using light energy to abstract electrons from H(2)O, generating O(2) and a proton gradient subsequently used for ATP formation. The protein is Photosystem II CP47 reaction center protein of Illicium oligandrum (Star anise).